The sequence spans 197 residues: Inner membrane protein p54 (197 aa).

The chain crosses the membrane as a helical span at residues 32 to 52; sequence YTILIAIVVLVIIIIVLIYLF. The tract at residues 84-123 is disordered; it reads PQPGTSKPAGATTASVGKPVTGRPATNRPVTDRPATNNPV. Tandem repeats lie at residues 139–142, 143–146, 147–150, and 151–154. Residues 139-154 form a 4 X 4 AA tandem repeats of A-A-A-S region; the sequence is AAASAAASAAASAAAS. An interaction with host DYNLL1 region spans residues 163–175; sequence YTTVTTQNTASQT.

Belongs to the asfivirus envelope protein p54 family. As to quaternary structure, interacts with the host light chain cytoplasmic dynein DYNLL1; this interaction is critical for intracellular microtubule-dependent virus transport toward viral factories.

Its subcellular location is the virion membrane. It localises to the host cytoplasm. The protein resides in the host cytoskeleton. It is found in the host endoplasmic reticulum membrane. Its function is as follows. Inner envelope protein involved, through its interaction with host dynein, in the intracellular microtubule-dependent transport of viral capsid toward viral factories. Seems to induce caspase-3 activation and apoptosis. Plays a role in virion morphogenesis by recruiting and transforming the host ER membranes into the precursors of the viral envelope. Involved in virus attachment to the host cell. In African swine fever virus (isolate Tick/South Africa/Pretoriuskop Pr4/1996) (ASFV), this protein is Inner membrane protein p54.